Here is a 338-residue protein sequence, read N- to C-terminus: Heat-inducible transcription repressor HrcA (338 aa).

It belongs to the HrcA family.

Functionally, negative regulator of class I heat shock genes (grpE-dnaK-dnaJ and groELS operons). Prevents heat-shock induction of these operons. The sequence is that of Heat-inducible transcription repressor HrcA from Thermotoga petrophila (strain ATCC BAA-488 / DSM 13995 / JCM 10881 / RKU-1).